A 156-amino-acid chain; its full sequence is Endogenous retrovirus group K member 113 Pro protein (156 aa).

One can recognise a Peptidase A2 domain in the interval 21 to 96 (FEGLVDTGAD…IPLNLWGRDL (76 aa)). The active site involves Asp26. The 46-residue stretch at 111–156 (YSPTSQKIMTKMGYIPGKGLGKNEDGIKIPVEAKINQKREGIGYPF) folds into the G-patch domain.

Belongs to the peptidase A2 family. HERV class-II K(HML-2) subfamily. As to quaternary structure, active as a homodimer. Autoproteolytically processed at the N-terminus. Expected C-terminal autoprocessing not detected. The sequence shown is that of the processed Pro protein.

It catalyses the reaction Processing at the authentic HIV-1 PR recognition site and release of the mature p17 matrix and the p24 capsid protein, as a result of the cleavage of the -SQNY-|-PIVQ- cleavage site.. Retroviral proteases have roles in the processing of the primary translation products and the maturation of the viral particle. Endogenous Pro proteins may have kept, lost or modified their original function during evolution. The protein is Endogenous retrovirus group K member 113 Pro protein (HERVK_113) of Homo sapiens (Human).